A 50-amino-acid polypeptide reads, in one-letter code: Large ribosomal subunit protein bL33B (50 aa).

This sequence belongs to the bacterial ribosomal protein bL33 family.

This is Large ribosomal subunit protein bL33B from Ligilactobacillus salivarius (strain UCC118) (Lactobacillus salivarius).